Consider the following 316-residue polypeptide: tRNA pseudouridine synthase B (316 aa).

D47 (nucleophile) is an active-site residue.

Belongs to the pseudouridine synthase TruB family. Type 1 subfamily.

It catalyses the reaction uridine(55) in tRNA = pseudouridine(55) in tRNA. Responsible for synthesis of pseudouridine from uracil-55 in the psi GC loop of transfer RNAs. This Aliivibrio fischeri (strain MJ11) (Vibrio fischeri) protein is tRNA pseudouridine synthase B.